We begin with the raw amino-acid sequence, 229 residues long: Uracil-DNA glycosylase (229 aa).

The active-site Proton acceptor is Asp71.

It belongs to the uracil-DNA glycosylase (UDG) superfamily. UNG family.

It is found in the cytoplasm. The catalysed reaction is Hydrolyzes single-stranded DNA or mismatched double-stranded DNA and polynucleotides, releasing free uracil.. Functionally, excises uracil residues from the DNA which can arise as a result of misincorporation of dUMP residues by DNA polymerase or due to deamination of cytosine. The sequence is that of Uracil-DNA glycosylase from Campylobacter lari (strain RM2100 / D67 / ATCC BAA-1060).